The primary structure comprises 88 residues: Large ribosomal subunit protein bL27 (88 aa).

The tract at residues 1–21 (MAHKKGTGSTRNGRDSNAKRL) is disordered.

The protein belongs to the bacterial ribosomal protein bL27 family.

The chain is Large ribosomal subunit protein bL27 from Parasynechococcus marenigrum (strain WH8102).